The chain runs to 560 residues: Hypermethylated in cancer 2 protein (560 aa).

Residues 24 to 87 form the BTB domain; it reads CDVIIVVENA…IYTGKLLSSD (64 aa). Disordered stretches follow at residues 122 to 163 and 183 to 367; these read RSLL…KTKR and HCTT…GGRN. Composition is skewed to polar residues over residues 126 to 153 and 183 to 203; these read NKPTTPTNGRTSRNQRLSSTPVTPNQMS and HCTTSNSLSPSTSKNGSNGSC. Over residues 224–242 the composition is skewed to low complexity; that stretch reads EEVSPSSIPQESPQSASES. Residues 243–259 show a composition bias toward polar residues; it reads TANSASFDENPNTQNLT. Residues 296-308 are compositionally biased toward basic and acidic residues; sequence PKSEGKKGEDMER. A compositionally biased stretch (low complexity) spans 348–362; it reads ENGQEQSEESGQSEN. 5 consecutive C2H2-type zinc fingers follow at residues 387–409, 450–472, 478–500, 506–528, and 534–556; these read YVCIPCGKGFPSSEELNAHVETH, FSCSVCNKSYKDPATLRQHEKTH, FPCNICGKMFTQRGTMTRHMRSH, FACEECGMRFTRQYRLTEHMRVH, and YECQLCGGKFTQQRNLISHLRMH.

The protein belongs to the krueppel C2H2-type zinc-finger protein family. Hic subfamily.

The protein resides in the nucleus. Transcriptional repressor. The protein is Hypermethylated in cancer 2 protein (hic2) of Danio rerio (Zebrafish).